A 71-amino-acid chain; its full sequence is Exodeoxyribonuclease 7 small subunit (71 aa).

The protein belongs to the XseB family. As to quaternary structure, heterooligomer composed of large and small subunits.

It is found in the cytoplasm. The catalysed reaction is Exonucleolytic cleavage in either 5'- to 3'- or 3'- to 5'-direction to yield nucleoside 5'-phosphates.. In terms of biological role, bidirectionally degrades single-stranded DNA into large acid-insoluble oligonucleotides, which are then degraded further into small acid-soluble oligonucleotides. The protein is Exodeoxyribonuclease 7 small subunit of Streptococcus equi subsp. equi (strain 4047).